Consider the following 496-residue polypeptide: Cytosol aminopeptidase (496 aa).

The Mn(2+) site is built by lysine 258 and aspartate 263. Residue lysine 270 is part of the active site. Residues aspartate 281, aspartate 340, and glutamate 342 each coordinate Mn(2+). Residue arginine 344 is part of the active site.

Belongs to the peptidase M17 family. Mn(2+) serves as cofactor.

It is found in the cytoplasm. It catalyses the reaction Release of an N-terminal amino acid, Xaa-|-Yaa-, in which Xaa is preferably Leu, but may be other amino acids including Pro although not Arg or Lys, and Yaa may be Pro. Amino acid amides and methyl esters are also readily hydrolyzed, but rates on arylamides are exceedingly low.. The enzyme catalyses Release of an N-terminal amino acid, preferentially leucine, but not glutamic or aspartic acids.. Its function is as follows. Presumably involved in the processing and regular turnover of intracellular proteins. Catalyzes the removal of unsubstituted N-terminal amino acids from various peptides. In Helicobacter pylori (strain ATCC 700392 / 26695) (Campylobacter pylori), this protein is Cytosol aminopeptidase (pepA).